The sequence spans 459 residues: Putative BTB/POZ domain-containing protein R541 (459 aa).

Residues 76-143 form the BTB domain; it reads NHITINVGGK…NQKSTNIELY (68 aa).

It belongs to the mimivirus BTB/WD family.

This Acanthamoeba polyphaga mimivirus (APMV) protein is Putative BTB/POZ domain-containing protein R541.